The chain runs to 990 residues: Storkhead-box protein 1 (990 aa).

The span at 396–408 (TTRHKDSSKEVIG) shows a compositional bias: basic and acidic residues. Disordered stretches follow at residues 396 to 471 (TTRH…VHHL), 562 to 586 (VAKAPVHPVSDDFRGGPGNYPPRRV), 712 to 736 (GLSDSEQDQVALSHSDPGAGDDGGC), and 809 to 832 (LFSNAGESPNPDLSDNPGQNSRIP). Basic residues predominate over residues 416-431 (KSRRRGSSHKGRHKAR). Residues 809–830 (LFSNAGESPNPDLSDNPGQNSR) are compositionally biased toward polar residues.

In terms of tissue distribution, detected in sensory epithelial cells of the inner ear but not in adjacent surrounding tissue (at protein level).

It localises to the nucleus. The protein resides in the cytoplasm. Its subcellular location is the cytoskeleton. It is found in the microtubule organizing center. The protein localises to the centrosome. Involved in regulating the levels of reactive oxidative species and reactive nitrogen species and in mitochondrial homeostasis in the placenta. Required for regulation of inner ear epithelial cell proliferation via the AKT signaling pathway. Involved in cell cycle regulation by binding to the CCNB1 promoter, up-regulating its expression and promoting mitotic entry. Induces phosphorylation of MAPT/tau. The chain is Storkhead-box protein 1 from Mus musculus (Mouse).